The primary structure comprises 972 residues: MAAGFFISKSVGIVGIVLALGAVATIIALSVVYAQEKNKSSGGSGGSDTTSTTTASTTTTSTTTASTTAAPNNPWNRWRLPTALKPESYEVTLQPFLTPDDNNMYIFKGNSSVVFLCEEATDLILIHSNKLNYTLQGGFHASLHAVNGSTPPTISNTWLETNTQYLVLQLAGPLQQGQHYRLFSIFTGELADDLAGFYRSEYTEGNVTKVVATTQMQAPDARKAFPCFDEPAMKAVFTVTMIHPSDHTAISNMPVHSTYQLQMDGQSWNVTQFDPTPRMSTYLLAFIVSQFDYVENNTGKVQIRIWGRPAAIAEGQGEYALEKTGPILSFFERHYNTAYPLPKSDQVGLPDFNAGAMENWGLVTYRENSLLYDNAYSSIGNKERVVTVIAHELAHQWFGNLVTLRWWNDLWLNEGFASYVEYLGADSAEPTWDIKDLMVLNELYTVMATDALTTSHPLTFREDEINTPAQISEVFDSIAYSKGASVLRMLSDFLTEDVFKEGLQSYLHDFSYNNTVYTDLWDHLQEAVNKNSVPLPDSIGAIMDRWTLQMGFPVVTVNTLTGSVQQSHFLLDSNSTVERPSVFNYTWIVPITWMTPSRTGDRYWLVDVSATNSDFSVGSSTWLLLNLNVSGYFRVNYNQENWDQLLQQLSNNHQAIPVINRAQIIDDAFNLARAQQVSVTLALNTTRFLSGETAYMPWQAALNNLQYFQLMFDRSEVFGAMTKYIQKQVTPLFEYYRTATNNWTAIPSALMDQYNEINAISTACSYGIAECQQLATALYQQWRQNVSNNPIAPNLRSAIYCSAVATGGEEVWDFIWERFLEAPVVSEADKLRTALTCSTETWILQRYLQYTIDPTKIRKQDATSTINSIASNVVGQPLAWDFIRSNWRTLFGQYGGGSFSFSRLISAVTQRFNTEFELKQLEQFKADNQDIGFGSGTRALEQALERTRTNINWVKENKEVVHAWFRAETASS.

Residues 2–10 (AAGFFISKS) are Cytoplasmic-facing. Residues 11–31 (VGIVGIVLALGAVATIIALSV) form a helical; Signal-anchor for type II membrane protein membrane-spanning segment. Topologically, residues 32–972 (VYAQEKNKSS…AWFRAETASS (941 aa)) are extracellular. The tract at residues 33–72 (YAQEKNKSSGGSGGSDTTSTTTASTTTTSTTTASTTAAPN) is cytosolic Ser/Thr-rich junction. Residues 37–77 (KNKSSGGSGGSDTTSTTTASTTTTSTTTASTTAAPNNPWNR) form a disordered region. Residue N38 is glycosylated (N-linked (GlcNAc...) asparagine). Low complexity predominate over residues 47–70 (SDTTSTTTASTTTTSTTTASTTAA). The interval 73–967 (NPWNRWRLPT…KEVVHAWFRA (895 aa)) is metalloprotease. Residues N110, N132, N147, N206, N269, and N296 are each glycosylated (N-linked (GlcNAc...) asparagine). 355–359 (GAMEN) lines the substrate pocket. H391 lines the Zn(2+) pocket. Residue E392 is the Proton acceptor of the active site. Zn(2+) contacts are provided by H395 and E414. 6 N-linked (GlcNAc...) asparagine glycosylation sites follow: N513, N574, N584, N628, N684, and N742. C764 and C771 are disulfide-bonded. Residue N785 is glycosylated (N-linked (GlcNAc...) asparagine). Cysteines 801 and 837 form a disulfide.

It belongs to the peptidase M1 family. As to quaternary structure, homodimer. Zn(2+) is required as a cofactor. In terms of tissue distribution, detected in the plasma and granule fractions of egg yolk (at protein level).

Its subcellular location is the cell membrane. The catalysed reaction is Differs from other aminopeptidases in broad specificity for amino acids in the P1 position and the ability to hydrolyze peptides of four or five residues that contain Pro in the P1' position.. Broad specificity aminopeptidase. Degrades a variety of peptides possessing various N-terminal amino acids including hydrophobic, basic and acidic amino acids. Preferentially hydrolyzes small peptides consisting of 4 or 5 amino acids. Hydrolyzes the N-terminal Xaa-Pro bonds in the chicken brain peptide Leu-Pro-Leu-Arg-PheNH2, the substance P fragment Arg-Pro-Lys-Pro and the bradykinin fragment Arg-Pro-Pro-Gly-Phe. Hydrolyzes the N-formylated peptides fMet-Leu-Phe, fMet-Ala-Gly-Ser-Glu and fMet-Nle-Leu-Phe-Nle-Tyr-Lys, but does not hydrolyze peptides with acetylation or pyroglutamic acid at N-terminus. Does not hydrolyze large peptides such as complete substance P, bradykinin or schistoFLRFamide. This is Aminopeptidase Ey (ANPEP) from Gallus gallus (Chicken).